The chain runs to 367 residues: Putrescine-binding periplasmic protein SpuD (367 aa).

A signal peptide spans 1-24 (MMKRFGKTLLALTLAGSVAGMAQA). Putrescine is bound at residue 36–37 (SD). Cysteines 173 and 236 form a disulfide. D244 and D275 together coordinate putrescine.

It belongs to the bacterial solute-binding protein PotD/PotF family.

Its subcellular location is the periplasm. It localises to the secreted. Functionally, putrescine-binding protein probably required for putrescine uptake into cells. Binds putrescine with high affinity, spermidine with relatively low affinity. Does not bind cadaverine or spermine. Putrescine binding induces large inter-domain conformational changes. The sequence is that of Putrescine-binding periplasmic protein SpuD (spuD) from Pseudomonas aeruginosa (strain UCBPP-PA14).